Reading from the N-terminus, the 415-residue chain is Gamma-glutamyl phosphate reductase (415 aa).

Belongs to the gamma-glutamyl phosphate reductase family.

The protein resides in the cytoplasm. It carries out the reaction L-glutamate 5-semialdehyde + phosphate + NADP(+) = L-glutamyl 5-phosphate + NADPH + H(+). The protein operates within amino-acid biosynthesis; L-proline biosynthesis; L-glutamate 5-semialdehyde from L-glutamate: step 2/2. Its function is as follows. Catalyzes the NADPH-dependent reduction of L-glutamate 5-phosphate into L-glutamate 5-semialdehyde and phosphate. The product spontaneously undergoes cyclization to form 1-pyrroline-5-carboxylate. The sequence is that of Gamma-glutamyl phosphate reductase from Dictyoglomus turgidum (strain DSM 6724 / Z-1310).